The sequence spans 224 residues: uncharacterized protein (224 aa).

The protein to M.tuberculosis Rv2558.

This is an uncharacterized protein from Mycobacterium tuberculosis (strain CDC 1551 / Oshkosh).